Consider the following 273-residue polypeptide: 3-methyl-2-oxobutanoate hydroxymethyltransferase (273 aa).

Mg(2+) is bound by residues Asp49 and Asp88. Residues 49 to 50 (DS), Asp88, and Lys118 each bind 3-methyl-2-oxobutanoate. Glu120 contacts Mg(2+). Catalysis depends on Glu187, which acts as the Proton acceptor.

This sequence belongs to the PanB family. In terms of assembly, homodecamer; pentamer of dimers. Requires Mg(2+) as cofactor.

It is found in the cytoplasm. It carries out the reaction 3-methyl-2-oxobutanoate + (6R)-5,10-methylene-5,6,7,8-tetrahydrofolate + H2O = 2-dehydropantoate + (6S)-5,6,7,8-tetrahydrofolate. It participates in cofactor biosynthesis; (R)-pantothenate biosynthesis; (R)-pantoate from 3-methyl-2-oxobutanoate: step 1/2. Functionally, catalyzes the reversible reaction in which hydroxymethyl group from 5,10-methylenetetrahydrofolate is transferred onto alpha-ketoisovalerate to form ketopantoate. The sequence is that of 3-methyl-2-oxobutanoate hydroxymethyltransferase from Sinorhizobium fredii (strain NBRC 101917 / NGR234).